The primary structure comprises 61 residues: Probable tautomerase lmo2564 (61 aa).

Residue Pro2 is the Proton acceptor; via imino nitrogen of the active site.

It belongs to the 4-oxalocrotonate tautomerase family.

The sequence is that of Probable tautomerase lmo2564 from Listeria monocytogenes serovar 1/2a (strain ATCC BAA-679 / EGD-e).